A 30-amino-acid chain; its full sequence is GIPCGESCVWIPCISSAIGCSCKSKVCYRN.

Positions 1 to 30 form a cross-link, cyclopeptide (Gly-Asn); the sequence is GIPCGESCVWIPCISSAIGCSCKSKVCYRN. 3 cysteine pairs are disulfide-bonded: Cys-4-Cys-20, Cys-8-Cys-22, and Cys-13-Cys-27.

Post-translationally, this is a cyclic peptide.

In terms of biological role, probably participates in a plant defense mechanism. The polypeptide is Cycloviolacin-O2 (Viola biflora (Yellow wood violet)).